The following is a 457-amino-acid chain: NAC domain-containing protein 69 (457 aa).

Residues 4-153 (DLVGYRFYPT…NYVICQVMYK (150 aa)) form the NAC domain. A DNA-binding region spans residues 107–159 (IGIKKTLVYYEGRVPKGVWTPWVMHEYHITCLPQDQRNYVICQVMYKGEDGDV). Disordered stretches follow at residues 158 to 180 (DVPS…SNTV) and 302 to 332 (DSNS…SNRQ). The segment covering 162 to 180 (GGNNSSEPSQSLVSDSNTV) has biased composition (polar residues). Low complexity predominate over residues 302 to 311 (DSNSDAESIS). Residues 312 to 332 (ATSYQGTSSPGDDSVGSSNRQ) are compositionally biased toward polar residues. Residues 421 to 441 (IYLMRMIIGFILLLALISNII) traverse the membrane as a helical segment.

The protein resides in the membrane. It localises to the nucleus. Its function is as follows. Transcription activator activated by proteolytic cleavage through regulated intramembrane proteolysis (RIP). Involved in salt stress response during seed germination and seedling growth. Binds the auxin-responsive IAA30 gene promoter and may serve as a molecular link that interconnects a developmental feedback loop of auxin signaling with a salt signal transduction pathway during seed germination. This is NAC domain-containing protein 69 (NAC69) from Arabidopsis thaliana (Mouse-ear cress).